We begin with the raw amino-acid sequence, 212 residues long: Peptidyl-prolyl cis-trans isomerase-like 3 (212 aa).

The region spanning 1-198 is the PPIase cyclophilin-type domain; the sequence is MSVTLHTTHG…EGEEGGYEAI (198 aa).

This sequence belongs to the cyclophilin-type PPIase family. PPIL3 subfamily.

It carries out the reaction [protein]-peptidylproline (omega=180) = [protein]-peptidylproline (omega=0). Functionally, PPIases accelerate the folding of proteins. It catalyzes the cis-trans isomerization of proline imidic peptide bonds in oligopeptides. This is Peptidyl-prolyl cis-trans isomerase-like 3 (cyp10) from Aspergillus fumigatus (strain ATCC MYA-4609 / CBS 101355 / FGSC A1100 / Af293) (Neosartorya fumigata).